The primary structure comprises 178 residues: MYHQLILMALIGVIMANVVPFSMSNIPEEYKEFIPEEVKNFYKNLTQEDRQILRELASKHATFANEDAALEALKNTSDKLYQKAVELRNFVKAKIDSLKPDAKAFVDEIIAKVRSLRPEDGQKLDMEKLKQAARDIIAKYEALNEETREELKATFPNTTKIITNEKFKRIANSFLQKN.

Residues 1 to 16 (MYHQLILMALIGVIMA) form the signal peptide. 2 N-linked (GlcNAc...) asparagine glycosylation sites follow: N44 and N75. Coiled coils occupy residues 67-89 (DAAL…ELRN) and 122-154 (QKLD…LKAT). A glycan (N-linked (GlcNAc...) asparagine) is linked at N157.

Belongs to the fatty-acid and retinol-binding protein (FARBP) family. N-glycosylated.

Its subcellular location is the secreted. In terms of biological role, binds retinol and different fatty acids. This Onchocerca dukei (Filarial nematode worm) protein is Fatty-acid and retinol-binding protein 1.